The sequence spans 268 residues: uncharacterized protein (268 aa).

The segment at 45–64 is disordered; sequence SDTQGPAPGINGQGKPSPGA.

This is an uncharacterized protein from Aquifex aeolicus (strain VF5).